The following is a 206-amino-acid chain: Protein GrpE (206 aa).

This sequence belongs to the GrpE family. In terms of assembly, homodimer.

It localises to the cytoplasm. Functionally, participates actively in the response to hyperosmotic and heat shock by preventing the aggregation of stress-denatured proteins, in association with DnaK and GrpE. It is the nucleotide exchange factor for DnaK and may function as a thermosensor. Unfolded proteins bind initially to DnaJ; upon interaction with the DnaJ-bound protein, DnaK hydrolyzes its bound ATP, resulting in the formation of a stable complex. GrpE releases ADP from DnaK; ATP binding to DnaK triggers the release of the substrate protein, thus completing the reaction cycle. Several rounds of ATP-dependent interactions between DnaJ, DnaK and GrpE are required for fully efficient folding. This Shewanella baltica (strain OS223) protein is Protein GrpE.